Here is a 304-residue protein sequence, read N- to C-terminus: tRNA pseudouridine synthase B (304 aa).

Aspartate 48 functions as the Nucleophile in the catalytic mechanism.

This sequence belongs to the pseudouridine synthase TruB family. Type 1 subfamily.

It carries out the reaction uridine(55) in tRNA = pseudouridine(55) in tRNA. Responsible for synthesis of pseudouridine from uracil-55 in the psi GC loop of transfer RNAs. The polypeptide is tRNA pseudouridine synthase B (Pseudomonas paraeruginosa (strain DSM 24068 / PA7) (Pseudomonas aeruginosa (strain PA7))).